A 610-amino-acid polypeptide reads, in one-letter code: Elongation factor 4 (610 aa).

The tr-type G domain maps to 13–195 (SHIRNFSIVA…AIVRKLPAPK (183 aa)). GTP contacts are provided by residues 25–30 (DHGKST) and 142–145 (NKID).

The protein belongs to the TRAFAC class translation factor GTPase superfamily. Classic translation factor GTPase family. LepA subfamily.

It is found in the cell inner membrane. The catalysed reaction is GTP + H2O = GDP + phosphate + H(+). In terms of biological role, required for accurate and efficient protein synthesis under certain stress conditions. May act as a fidelity factor of the translation reaction, by catalyzing a one-codon backward translocation of tRNAs on improperly translocated ribosomes. Back-translocation proceeds from a post-translocation (POST) complex to a pre-translocation (PRE) complex, thus giving elongation factor G a second chance to translocate the tRNAs correctly. Binds to ribosomes in a GTP-dependent manner. The chain is Elongation factor 4 from Rhizobium etli (strain CIAT 652).